The following is a 561-amino-acid chain: uncharacterized protein (561 aa).

6 helical membrane-spanning segments follow: residues 10 to 29, 34 to 56, 63 to 80, 95 to 117, 122 to 144, and 164 to 186; these read LLRN…GYWI, FGSL…SQIG, LKTV…FQSG, VLMA…RMFH, LAAG…SSAL, and GYAV…ILPW. RCK C-terminal domains lie at 205-287 and 294-376; these read QGMA…LLGE and HDMD…ELGS. 5 helical membrane-spanning segments follow: residues 386–403, 407–429, 442–464, 479–501, and 538–560; these read LVFH…GLIV, GSIP…FGWY, AAST…LQTG, FMLG…RYVL, and SFAI…VVAF.

Belongs to the AAE transporter (TC 2.A.81) family.

It localises to the cell membrane. This is an uncharacterized protein from Zymomonas mobilis subsp. mobilis (strain ATCC 31821 / ZM4 / CP4).